The sequence spans 170 residues: J domain-containing protein (170 aa).

A J domain is found at 17 to 82 (DYYALLGCDE…SKRALYDKWR (66 aa)). The disordered stretch occupies residues 101–170 (QQSMHWSKPN…VLSKFRNYEI (70 aa)). Residues 110 to 120 (NTKDRMLEGDG) show a composition bias toward basic and acidic residues. Over residues 121–134 (SKPSGPSSLGPSNP) the composition is skewed to low complexity.

This is J domain-containing protein (jdp) from Bombyx mori (Silk moth).